A 148-amino-acid polypeptide reads, in one-letter code: Lysozyme C (148 aa).

The N-terminal stretch at 1–18 (MKAVIILGLVLLSVTVQG) is a signal peptide. Residues 19 to 148 (KIFERCELAR…VSQYVQGCGV (130 aa)) enclose the C-type lysozyme domain. Intrachain disulfides connect cysteine 24–cysteine 146, cysteine 48–cysteine 134, cysteine 83–cysteine 99, and cysteine 95–cysteine 113. Catalysis depends on residues glutamate 53 and aspartate 71.

The protein belongs to the glycosyl hydrolase 22 family. In terms of assembly, monomer.

It localises to the secreted. The enzyme catalyses Hydrolysis of (1-&gt;4)-beta-linkages between N-acetylmuramic acid and N-acetyl-D-glucosamine residues in a peptidoglycan and between N-acetyl-D-glucosamine residues in chitodextrins.. In terms of biological role, lysozymes have primarily a bacteriolytic function; those in tissues and body fluids are associated with the monocyte-macrophage system and enhance the activity of immunoagents. This chain is Lysozyme C (LYZ), found in Papio anubis (Olive baboon).